A 350-amino-acid polypeptide reads, in one-letter code: Methionine import ATP-binding protein MetN (350 aa).

Residues 2–241 (IQIKNLKKEY…PQAPVTRSFV (240 aa)) enclose the ABC transporter domain. 38-45 (GHSGAGKS) is an ATP binding site.

The protein belongs to the ABC transporter superfamily. Methionine importer (TC 3.A.1.24) family. The complex is composed of two ATP-binding proteins (MetN), two transmembrane proteins (MetI) and a solute-binding protein (MetQ).

Its subcellular location is the cell inner membrane. It carries out the reaction L-methionine(out) + ATP + H2O = L-methionine(in) + ADP + phosphate + H(+). The enzyme catalyses D-methionine(out) + ATP + H2O = D-methionine(in) + ADP + phosphate + H(+). Part of the ABC transporter complex MetNIQ involved in methionine import. Responsible for energy coupling to the transport system. This is Methionine import ATP-binding protein MetN from Francisella tularensis subsp. tularensis (strain SCHU S4 / Schu 4).